A 393-amino-acid chain; its full sequence is Staphopain B (393 aa).

Positions 1 to 36 (MNSSCKTRVFNIISIIMVSMLILSLGAFANNNKAKA) are cleaved as a signal peptide. Residues 37-219 (DSHSKQLEIN…KVEENEAIQE (183 aa)) constitute a propeptide that is removed on maturation. Active-site residues include C243, H340, and N360.

This sequence belongs to the peptidase C47 family. In terms of assembly, in the cytoplasm, prematurely activated/folded SspB forms a stable non-covalent complex with SspC. Post-translationally, proteolytically cleaved by staphylococcal serine protease (SspA).

Its subcellular location is the secreted. Its activity is regulated as follows. Prematurely activated/folded staphopain B is inhibited by staphostatin B (SspC), which is probably required to protect staphylococcal cytoplasmic proteins from degradation by SspB. In terms of biological role, cysteine protease that plays an important role in the inhibition of host innate immune response. Degrades host elastin, fibrogen, fibronectin and kininogen. Blocks phagocytosis of opsonised S.aureus by neutrophils and monocytes by inducing their death in a proteolytic activity-dependent manner. Decreases surface expression of the 'don't eat me' signal CD31 on neutrophils. Cleaves host galectin-3/LGALS3, thereby inhibiting the neutrophil-activating ability of the lectin. This is Staphopain B (sspB) from Staphylococcus aureus.